The chain runs to 904 residues: Structural polyprotein (904 aa).

Disordered regions lie at residues 1–27, 35–54, and 320–348; these read ADQE…VETE, VETP…SARS, and NNSN…KIGP. The segment covering 39 to 53 has biased composition (polar residues); it reads NRINTPMAQDTSSAR. A compositionally biased stretch (basic and acidic residues) spans 329 to 343; that stretch reads VKEKTKNIPKPKTEN.

The protein belongs to the picornaviruses polyprotein family. In terms of processing, specific enzymatic cleavages in vivo yield mature proteins.

It localises to the virion. It is found in the host cytoplasm. In terms of biological role, structural polyprotein: precursor of all the viral capsid proteins. Its function is as follows. Forms, together with protein VP2 and protein VP3, an icosahedral capsid protecting the viral RNA genome. The icosahedral capsid has a pseudo-T=3 symmetry with a diameter of approximately 300 Angstroms, and is composed of 60 copies of each capsid proteins. Forms, together with protein VP1 and protein VP3, an icosahedral capsid protecting the viral RNA genome. The icosahedral capsid has a pseudo-T=3 symmetry with a diameter of approximately 300 Angstroms, and is composed of 60 copies of each capsid proteins. Functionally, forms, together with protein VP1 and protein VP2, an icosahedral capsid protecting the viral RNA genome. The icosahedral capsid has a pseudo-T=3 symmetry with a diameter of approximately 300 Angstroms, and is composed of 60 copies of each capsid proteins. This Apis mellifera (Honeybee) protein is Structural polyprotein.